The sequence spans 199 residues: Imidazoleglycerol-phosphate dehydratase (199 aa).

It belongs to the imidazoleglycerol-phosphate dehydratase family.

It is found in the cytoplasm. It catalyses the reaction D-erythro-1-(imidazol-4-yl)glycerol 3-phosphate = 3-(imidazol-4-yl)-2-oxopropyl phosphate + H2O. Its pathway is amino-acid biosynthesis; L-histidine biosynthesis; L-histidine from 5-phospho-alpha-D-ribose 1-diphosphate: step 6/9. The protein is Imidazoleglycerol-phosphate dehydratase of Paramagnetospirillum magneticum (strain ATCC 700264 / AMB-1) (Magnetospirillum magneticum).